We begin with the raw amino-acid sequence, 98 residues long: NADH-ubiquinone oxidoreductase chain 4L (98 aa).

3 helical membrane passes run 2-22 (PSIS…MLVF), 29-49 (SLLC…LTIM), and 61-81 (ILLL…LVMM).

It belongs to the complex I subunit 4L family. In terms of assembly, core subunit of respiratory chain NADH dehydrogenase (Complex I) which is composed of 45 different subunits.

Its subcellular location is the mitochondrion inner membrane. The catalysed reaction is a ubiquinone + NADH + 5 H(+)(in) = a ubiquinol + NAD(+) + 4 H(+)(out). In terms of biological role, core subunit of the mitochondrial membrane respiratory chain NADH dehydrogenase (Complex I) which catalyzes electron transfer from NADH through the respiratory chain, using ubiquinone as an electron acceptor. Part of the enzyme membrane arm which is embedded in the lipid bilayer and involved in proton translocation. The polypeptide is NADH-ubiquinone oxidoreductase chain 4L (MT-ND4L) (Lepilemur seali (Seal's sportive lemur)).